The primary structure comprises 329 residues: Putative oligopeptide transport ATP-binding protein YkfD (329 aa).

Residues 7 to 252 form the ABC transporter domain; that stretch reads LEVSQLKMHF…PLHPYTKALL (246 aa). Residue 44–51 participates in ATP binding; it reads GESGCGKS.

It belongs to the ABC transporter superfamily.

The protein is Putative oligopeptide transport ATP-binding protein YkfD (ykfD) of Bacillus subtilis (strain 168).